Consider the following 302-residue polypeptide: NAD kinase (302 aa).

The active-site Proton acceptor is the aspartate 79. Residues 79–80 (DG), 153–154 (ND), arginine 181, aspartate 183, 194–199 (TAYALS), alanine 218, and glutamine 252 each bind NAD(+).

It belongs to the NAD kinase family. It depends on a divalent metal cation as a cofactor.

It localises to the cytoplasm. It catalyses the reaction NAD(+) + ATP = ADP + NADP(+) + H(+). Involved in the regulation of the intracellular balance of NAD and NADP, and is a key enzyme in the biosynthesis of NADP. Catalyzes specifically the phosphorylation on 2'-hydroxyl of the adenosine moiety of NAD to yield NADP. In Ralstonia nicotianae (strain ATCC BAA-1114 / GMI1000) (Ralstonia solanacearum), this protein is NAD kinase.